The following is a 31-amino-acid chain: Nemertide alpha-6 (31 aa).

3 cysteine pairs are disulfide-bonded: cysteine 2–cysteine 16, cysteine 9–cysteine 20, and cysteine 15–cysteine 26. Proline 28 and proline 29 each carry 4-hydroxyproline.

It belongs to the nemertide family. As to expression, confined to the epidermis and to the mucus layer.

It localises to the secreted. Highly potent toxin against both insect and some mammalian sodium channels (Nav). It potently inhibits inactivation of insect sodium channels of B.germanica (BgNav1) (EC(50)=2.6 nM) and also delays the inactivation of mammalian Nav with potent activity on Nav1.1/SCN1A (hNav1.1/SCN1A; EC(50)=7.9 nM, rNav1.2/SCN2A; EC(50)=24.3 nM, rNav1.3/SCN3A; EC(50)=105.6 nM, rNav1.4/SCN4A; EC(50)=46.4 nM, hNav1.5/SCN5A; EC(50)=215.2 nM, mNav1.6/SCN8A; EC(50)=36.3 nM, hNav1.9/SCN9A; EC(50)=97.2 nM). 1 uM is enough to completely inhibits the inactivation, resulting in sustained non-inactivating currents. In addition, the toxin significantly enhances the recovery from inactivation, and the open state is not required for the toxin to interact with the channel. In vivo, injection into brine shrimp (Artemia salina) stops movement or causes death after 24 hours (EC(50)=2.8 uM). In Lineus sanguineus (Ribbon worm), this protein is Nemertide alpha-6.